We begin with the raw amino-acid sequence, 1096 residues long: Serine/threonine-protein kinase mig-15 (1096 aa).

In terms of domain architecture, Protein kinase spans Phe21–Ile288. ATP-binding positions include Val27–Val35 and Lys50. The Proton acceptor role is filled by Asp151. Residues His293–Asp315 show a composition bias toward basic and acidic residues. 4 disordered regions span residues His293–Met351, Leu380–Arg492, Lys517–Ile545, and Asn574–Pro664. Over residues Ala316 to Pro328 the composition is skewed to acidic residues. Residues Leu380–Gln393 are compositionally biased toward low complexity. 2 stretches are compositionally biased toward basic and acidic residues: residues Val397–Leu408 and Asn453–Ala472. Over residues Ser532–Arg541 the composition is skewed to pro residues. Residues Leu629–Asn642 are compositionally biased toward acidic residues. The CNH domain maps to Ser778–Val1070.

It belongs to the protein kinase superfamily. STE Ser/Thr protein kinase family. STE20 subfamily.

It catalyses the reaction L-seryl-[protein] + ATP = O-phospho-L-seryl-[protein] + ADP + H(+). It carries out the reaction L-threonyl-[protein] + ATP = O-phospho-L-threonyl-[protein] + ADP + H(+). In terms of biological role, involved in cell migration and signal transduction. Important in several developmental processes including epidermal development, Q neuroblast migrations and muscle arm targeting. Required with ina-1/pat-3 to stabilize the commissural axons growth cone along a precise direction and are required for the cell to respond appropriately when signaling in the growth cone must change. During gonad morphogenesis, involved in distal tip cell (DTC) migration from the dorsal side of the hermaphrodite body to the midbody to allow for formation of gonad arms. The protein is Serine/threonine-protein kinase mig-15 (mig-15) of Caenorhabditis elegans.